A 147-amino-acid chain; its full sequence is Hemoglobin subunit epsilon (147 aa).

The 145-residue stretch at 3 to 147 (HFTAEEKAAI…VAIALGHKYH (145 aa)) folds into the Globin domain. Residues Ser-14 and Ser-51 each carry the phosphoserine modification. Heme b is bound by residues His-64 and His-93.

It belongs to the globin family. In terms of assembly, heterotetramer of two alpha chains and two epsilon chains in early embryonic hemoglobin Gower-2; two zeta chains and two epsilon chains in early embryonic hemoglobin Gower-1. Red blood cells.

Its function is as follows. The epsilon chain is a beta-type chain of early mammalian embryonic hemoglobin. This chain is Hemoglobin subunit epsilon (HBE1), found in Lagothrix lagotricha (Brown woolly monkey).